Consider the following 1479-residue polypeptide: Chromosome partition protein MukB (1479 aa).

34 to 41 (GGNGAGKS) contributes to the ATP binding site. 5 coiled-coil regions span residues 337–418 (LNLV…QYQQ), 511–604 (QAER…APVW), 780–810 (RAAR…DVQK), 847–1116 (ELDR…AKAG), and 1206–1265 (DDPV…LQAV). Positions 666–783 (PGGSEDPRLN…EVPLFGRAAR (118 aa)) are flexible hinge.

This sequence belongs to the SMC family. MukB subfamily. As to quaternary structure, homodimerization via its hinge domain. Binds to DNA via its C-terminal region. Interacts, and probably forms a ternary complex, with MukE and MukF via its C-terminal region. The complex formation is stimulated by calcium or magnesium. Interacts with tubulin-related protein FtsZ.

The protein resides in the cytoplasm. The protein localises to the nucleoid. Functionally, plays a central role in chromosome condensation, segregation and cell cycle progression. Functions as a homodimer, which is essential for chromosome partition. Involved in negative DNA supercoiling in vivo, and by this means organize and compact chromosomes. May achieve or facilitate chromosome segregation by condensation DNA from both sides of a centrally located replisome during cell division. This Pectobacterium atrosepticum (strain SCRI 1043 / ATCC BAA-672) (Erwinia carotovora subsp. atroseptica) protein is Chromosome partition protein MukB.